The primary structure comprises 455 residues: Phosphoglucosamine mutase (455 aa).

S108 acts as the Phosphoserine intermediate in catalysis. Residues S108, D246, D248, and D250 each coordinate Mg(2+). S108 carries the post-translational modification Phosphoserine.

It belongs to the phosphohexose mutase family. Requires Mg(2+) as cofactor. Activated by phosphorylation.

It catalyses the reaction alpha-D-glucosamine 1-phosphate = D-glucosamine 6-phosphate. Functionally, catalyzes the conversion of glucosamine-6-phosphate to glucosamine-1-phosphate. This is Phosphoglucosamine mutase from Frankia alni (strain DSM 45986 / CECT 9034 / ACN14a).